Here is a 1224-residue protein sequence, read N- to C-terminus: Coatomer subunit alpha (1224 aa).

4 WD repeats span residues 7 to 37, 49 to 79, 91 to 121, and 133 to 163; these read TKSA…QLWD, EHDG…KVWN, GHLD…RVWN, and GHNH…RVWD. At Ser-173 the chain carries Phosphoserine. Thr-185 bears the Phosphothreonine mark. 2 WD repeats span residues 203–233 and 247–277; these read GHDR…KIWR and GHYN…RVWD. Phosphothreonine is present on Thr-591. Arg-965 carries the omega-N-methylarginine modification. Ser-1193 carries the phosphoserine modification.

In terms of assembly, oligomeric complex that consists of at least the alpha, beta, beta', gamma, delta, epsilon and zeta subunits. Interacts with SCYL1. Interacts with JAGN1. Interacts with TMEM41B. Interacts with SVEP1. Probably interacts with PEX11A.

The protein localises to the cytoplasm. It localises to the golgi apparatus membrane. It is found in the cytoplasmic vesicle. Its subcellular location is the COPI-coated vesicle membrane. The protein resides in the secreted. In terms of biological role, the coatomer is a cytosolic protein complex that binds to dilysine motifs and reversibly associates with Golgi non-clathrin-coated vesicles, which further mediate biosynthetic protein transport from the ER, via the Golgi up to the trans Golgi network. Coatomer complex is required for budding from Golgi membranes, and is essential for the retrograde Golgi-to-ER transport of dilysine-tagged proteins. In mammals, the coatomer can only be recruited by membranes associated to ADP-ribosylation factors (ARFs), which are small GTP-binding proteins; the complex also influences the Golgi structural integrity, as well as the processing, activity, and endocytic recycling of LDL receptors. Xenin stimulates exocrine pancreatic secretion. It inhibits pentagastrin-stimulated secretion of acid, to induce exocrine pancreatic secretion and to affect small and large intestinal motility. In the gut, xenin interacts with the neurotensin receptor. This is Coatomer subunit alpha (COPA) from Bos taurus (Bovine).